Here is a 1390-residue protein sequence, read N- to C-terminus: ATPase family AAA domain-containing protein 2 (1390 aa).

Positions 40–63 (RSAGAAQKKPAATTAKAGDGSSVK) are disordered. Low complexity predominate over residues 42 to 57 (AGAAQKKPAATTAKAG). Residues Ser60 and Ser61 each carry the phosphoserine modification. A Glycyl lysine isopeptide (Lys-Gly) (interchain with G-Cter in SUMO2) cross-link involves residue Lys125. Phosphoserine occurs at positions 165 and 170. Residues 216–380 (LNMYTRGKQK…HFERRRKRSR (165 aa)) form a disordered region. Over residues 223-232 (KQKDIQRTDE) the composition is skewed to basic and acidic residues. Over residues 244-288 (SSEEGEDQEHEDDGEDEDDEDDDDDDDDDDDDDDEDDEDEEDGEE) the composition is skewed to acidic residues. Lys317 is covalently cross-linked (Glycyl lysine isopeptide (Lys-Gly) (interchain with G-Cter in SUMO2)). Ser327, Ser337, Ser342, and Ser410 each carry phosphoserine. 467-474 (GPPGTGKT) serves as a coordination point for ATP. Phosphoserine occurs at positions 746 and 751. Coiled-coil stretches lie at residues 970–994 (LTAE…IFLR) and 1086–1112 (YAII…KKRG). A Bromo domain is found at 980 to 1092 (EQEEDTFREL…DTAYAIIKEE (113 aa)). The disordered stretch occupies residues 1124-1163 (HVMPKQNSTLVGDKRSDPEQNEKLKTPSTPVACSTPAQLK). Lys1128 participates in a covalent cross-link: Glycyl lysine isopeptide (Lys-Gly) (interchain with G-Cter in SUMO2). A compositionally biased stretch (basic and acidic residues) spans 1135 to 1148 (GDKRSDPEQNEKLK). Ser1139 is subject to Phosphoserine. Lys1148 is covalently cross-linked (Glycyl lysine isopeptide (Lys-Gly) (interchain with G-Cter in SUMO2)). Phosphothreonine occurs at positions 1149, 1152, and 1176. Over residues 1149 to 1160 (TPSTPVACSTPA) the composition is skewed to polar residues. The tract at residues 1181–1242 (RKISQAKDDS…SESKLELRNN (62 aa)) is disordered. Residues 1185-1200 (QAKDDSQNAIDHKIES) are compositionally biased toward basic and acidic residues. Residues Ser1200, Ser1233, and Ser1235 each carry the phosphoserine modification. The segment covering 1229-1242 (QQNASESKLELRNN) has biased composition (polar residues). Lys1236 participates in a covalent cross-link: Glycyl lysine isopeptide (Lys-Gly) (interchain with G-Cter in SUMO2). Ser1243 and Ser1302 each carry phosphoserine. Thr1323 is modified (phosphothreonine).

This sequence belongs to the AAA ATPase family. As to quaternary structure, interacts with ESR1 and NCOA3 and these interactions are enhanced by estradiol. Interacts with acetylated lysine residues on histone H1.4, H2A, H2B and H3 (in vitro). Highly expressed in estrogen receptor positive breast tumors and in osteosarcoma tumors.

It localises to the nucleus. The catalysed reaction is ATP + H2O = ADP + phosphate + H(+). Functionally, may be a transcriptional coactivator of the nuclear receptor ESR1 required to induce the expression of a subset of estradiol target genes, such as CCND1, MYC and E2F1. May play a role in the recruitment or occupancy of CREBBP at some ESR1 target gene promoters. May be required for histone hyperacetylation. Involved in the estrogen-induced cell proliferation and cell cycle progression of breast cancer cells. The sequence is that of ATPase family AAA domain-containing protein 2 (ATAD2) from Homo sapiens (Human).